Consider the following 144-residue polypeptide: Peptide methionine sulfoxide reductase MsrB (144 aa).

In terms of domain architecture, MsrB spans 6–128 (KDELKKKLTP…NSAALRFIPK (123 aa)). Cysteine 117 functions as the Nucleophile in the catalytic mechanism.

This sequence belongs to the MsrB Met sulfoxide reductase family.

The enzyme catalyses L-methionyl-[protein] + [thioredoxin]-disulfide + H2O = L-methionyl-(R)-S-oxide-[protein] + [thioredoxin]-dithiol. The polypeptide is Peptide methionine sulfoxide reductase MsrB (Shouchella clausii (strain KSM-K16) (Alkalihalobacillus clausii)).